A 123-amino-acid polypeptide reads, in one-letter code: Small ribosomal subunit protein uS12 (123 aa).

Positions 10 to 20 are enriched in basic residues; it reads KGRKKVKKKKT. The disordered stretch occupies residues 10-32; that stretch reads KGRKKVKKKKTAPALQGSPQKRG. D89 carries the 3-methylthioaspartic acid modification.

This sequence belongs to the universal ribosomal protein uS12 family. Part of the 30S ribosomal subunit. Contacts proteins S8 and S17. May interact with IF1 in the 30S initiation complex.

In terms of biological role, with S4 and S5 plays an important role in translational accuracy. Functionally, interacts with and stabilizes bases of the 16S rRNA that are involved in tRNA selection in the A site and with the mRNA backbone. Located at the interface of the 30S and 50S subunits, it traverses the body of the 30S subunit contacting proteins on the other side and probably holding the rRNA structure together. The combined cluster of proteins S8, S12 and S17 appears to hold together the shoulder and platform of the 30S subunit. In Halothermothrix orenii (strain H 168 / OCM 544 / DSM 9562), this protein is Small ribosomal subunit protein uS12.